Consider the following 319-residue polypeptide: Malate dehydrogenase (319 aa).

NAD(+)-binding positions include 10 to 15 (GAGNIG) and D34. Substrate contacts are provided by R83 and R89. NAD(+) is bound by residues N96 and 119-121 (ITN). Substrate is bound by residues N121 and R152. H176 (proton acceptor) is an active-site residue.

The protein belongs to the LDH/MDH superfamily. MDH type 3 family.

The enzyme catalyses (S)-malate + NAD(+) = oxaloacetate + NADH + H(+). In terms of biological role, catalyzes the reversible oxidation of malate to oxaloacetate. This Francisella tularensis subsp. mediasiatica (strain FSC147) protein is Malate dehydrogenase.